We begin with the raw amino-acid sequence, 506 residues long: Probable malate:quinone oxidoreductase (506 aa).

The protein belongs to the MQO family. FAD serves as cofactor.

The catalysed reaction is (S)-malate + a quinone = a quinol + oxaloacetate. Its pathway is carbohydrate metabolism; tricarboxylic acid cycle; oxaloacetate from (S)-malate (quinone route): step 1/1. The protein is Probable malate:quinone oxidoreductase of Rhodococcus jostii (strain RHA1).